The sequence spans 246 residues: 3-deoxy-manno-octulosonate cytidylyltransferase (246 aa).

It belongs to the KdsB family.

The protein localises to the cytoplasm. The enzyme catalyses 3-deoxy-alpha-D-manno-oct-2-ulosonate + CTP = CMP-3-deoxy-beta-D-manno-octulosonate + diphosphate. Its pathway is nucleotide-sugar biosynthesis; CMP-3-deoxy-D-manno-octulosonate biosynthesis; CMP-3-deoxy-D-manno-octulosonate from 3-deoxy-D-manno-octulosonate and CTP: step 1/1. It functions in the pathway bacterial outer membrane biogenesis; lipopolysaccharide biosynthesis. Functionally, activates KDO (a required 8-carbon sugar) for incorporation into bacterial lipopolysaccharide in Gram-negative bacteria. This is 3-deoxy-manno-octulosonate cytidylyltransferase from Rickettsia conorii (strain ATCC VR-613 / Malish 7).